Reading from the N-terminus, the 154-residue chain is Myoglobin (154 aa).

One can recognise a Globin domain in the interval 2-148; the sequence is GLSDGEWQSV…FRNDIAAKYK (147 aa). A Phosphoserine modification is found at S4. H65 contacts nitrite. H65 lines the O2 pocket. Phosphothreonine is present on T68. H94 contacts heme b.

It belongs to the globin family. In terms of assembly, monomeric.

The protein resides in the cytoplasm. It is found in the sarcoplasm. The enzyme catalyses Fe(III)-heme b-[protein] + nitric oxide + H2O = Fe(II)-heme b-[protein] + nitrite + 2 H(+). It carries out the reaction H2O2 + AH2 = A + 2 H2O. In terms of biological role, monomeric heme protein which primary function is to store oxygen and facilitate its diffusion within muscle tissues. Reversibly binds oxygen through a pentacoordinated heme iron and enables its timely and efficient release as needed during periods of heightened demand. Depending on the oxidative conditions of tissues and cells, and in addition to its ability to bind oxygen, it also has a nitrite reductase activity whereby it regulates the production of bioactive nitric oxide. Under stress conditions, like hypoxia and anoxia, it also protects cells against reactive oxygen species thanks to its pseudoperoxidase activity. This chain is Myoglobin (MB), found in Nycticebus coucang (Slow loris).